The primary structure comprises 624 residues: Poly(A)-specific ribonuclease PARN (624 aa).

D28 and E30 together coordinate a divalent metal cation. The R3H domain maps to 171 to 238 (KKFIDQVIEK…ERHIVISKVD (68 aa)). Position 213 is an N6-acetyllysine (K213). A divalent metal cation is bound by residues D285 and D375. At K492 the chain carries N6-acetyllysine. A Phosphoserine modification is found at S523. A Phosphoserine; by MAPKAPK2 modification is found at S543. Positions 551–612 (GKRTLSPDPR…ELSLAGSVSD (62 aa)) are disordered. A compositionally biased stretch (acidic residues) spans 567 to 579 (RESEEVSDSELEQ). 3 positions are modified to phosphoserine: S569, S573, and S575. The segment covering 592–601 (KKSKKLKRMK) has biased composition (basic residues). Phosphoserine occurs at positions 605, 609, and 613.

This sequence belongs to the CAF1 family. As to quaternary structure, homodimer. Found in a mRNA decay complex with RENT1, RENT2 and RENT3B. Interacts with KHSRP. Interacts with CELF1/CUGBP1. Interacts with ZC3HAV1 in an RNA-independent manner. Interacts with DHX36. Requires Mg(2+) as cofactor. In terms of processing, phosphorylation by MAPKAPK2, preventing GADD45A mRNA degradation after genotoxic stress.

The protein resides in the nucleus. It localises to the cytoplasm. The protein localises to the nucleolus. The catalysed reaction is Exonucleolytic cleavage of poly(A) to 5'-AMP.. Functionally, 3'-exoribonuclease that has a preference for poly(A) tails of mRNAs, thereby efficiently degrading poly(A) tails. Exonucleolytic degradation of the poly(A) tail is often the first step in the decay of eukaryotic mRNAs and is also used to silence certain maternal mRNAs translationally during oocyte maturation and early embryonic development. Interacts with both the 3'-end poly(A) tail and the 5'-end cap structure during degradation, the interaction with the cap structure being required for an efficient degradation of poly(A) tails. Involved in nonsense-mediated mRNA decay, a critical process of selective degradation of mRNAs that contain premature stop codons. Also involved in degradation of inherently unstable mRNAs that contain AU-rich elements (AREs) in their 3'-UTR, possibly via its interaction with KHSRP. Probably mediates the removal of poly(A) tails of AREs mRNAs, which constitutes the first step of destabilization. Also able to recognize poly(A) tails of microRNAs such as MIR21 and H/ACA box snoRNAs (small nucleolar RNAs) leading to leading to microRNAs degradation or snoRNA increased stability. The polypeptide is Poly(A)-specific ribonuclease PARN (Parn) (Mus musculus (Mouse)).